A 309-amino-acid chain; its full sequence is 15-cis-phytoene synthase (309 aa).

Residues 290 to 309 (LTSRMRAHPPRPAHLWQRPL) are disordered.

This sequence belongs to the phytoene/squalene synthase family. It depends on ATP as a cofactor. The cofactor is Mn(2+). Requires Mg(2+) as cofactor.

It carries out the reaction 2 (2E,6E,10E)-geranylgeranyl diphosphate = 15-cis-phytoene + 2 diphosphate. The protein operates within carotenoid biosynthesis; phytoene biosynthesis. Its activity is regulated as follows. Inhibited by phosphate ions and squalestatin. In terms of biological role, involved in the biosynthesis of carotenoids. Catalyzes the condensation of two molecules of geranylgeranyl diphosphate (GGPP) to give prephytoene diphosphate (PPPP) and the subsequent rearrangement of the cyclopropylcarbinyl intermediate to yield the 15-cis-phytoene isomer. The sequence is that of 15-cis-phytoene synthase (crtB) from Pantoea ananas (Erwinia uredovora).